The following is a 157-amino-acid chain: Endoribonuclease YbeY (157 aa).

Residues His116, His120, and His126 each coordinate Zn(2+).

This sequence belongs to the endoribonuclease YbeY family. It depends on Zn(2+) as a cofactor.

The protein localises to the cytoplasm. In terms of biological role, single strand-specific metallo-endoribonuclease involved in late-stage 70S ribosome quality control and in maturation of the 3' terminus of the 16S rRNA. This is Endoribonuclease YbeY from Pseudarthrobacter chlorophenolicus (strain ATCC 700700 / DSM 12829 / CIP 107037 / JCM 12360 / KCTC 9906 / NCIMB 13794 / A6) (Arthrobacter chlorophenolicus).